Here is a 198-residue protein sequence, read N- to C-terminus: Recombination protein RecR (198 aa).

A C4-type zinc finger spans residues 58–73 (CSICGNFTDSDPCAIC). One can recognise a Toprim domain in the interval 81–175 (SIICVIEEPK…KVTRIAHGIP (95 aa)).

Belongs to the RecR family.

Its function is as follows. May play a role in DNA repair. It seems to be involved in an RecBC-independent recombinational process of DNA repair. It may act with RecF and RecO. The polypeptide is Recombination protein RecR (Clostridium kluyveri (strain NBRC 12016)).